The sequence spans 702 residues: Exodeoxyribonuclease 1 (702 aa).

An N-domain region spans residues 1-96; that stretch reads MGIQGLLPQL…STESKRRDKR (96 aa). D30, D78, E150, D152, D171, D173, and D227 together coordinate Mg(2+). The interval 114 to 247 is I-domain; sequence NAMDYFQKCV…ITAMKLVRRF (134 aa). S372 carries the phosphoserine modification. Disordered stretches follow at residues 465 to 571 and 660 to 685; these read SIQD…SQRS and SFNSSPILHEESKKRDIETTKSSQAR. Residues 474–498 show a composition bias toward polar residues; it reads NSQSLEEPVSESQLSTQIPSSFITT. Acidic residues-rich tracts occupy residues 500-518 and 535-550; these read LEDDDNLSEEVSEVVSDIE and NTDDDGDGDTSEDYSE. The segment covering 558-571 has biased composition (low complexity); that stretch reads TSSTTSFPGSSQRS. Residues 667–678 are compositionally biased toward basic and acidic residues; that stretch reads LHEESKKRDIET.

It belongs to the XPG/RAD2 endonuclease family. EXO1 subfamily. Interacts with mismatch repair protein MSH2. Mg(2+) serves as cofactor.

The protein localises to the nucleus. Its activity is regulated as follows. Inactivated by calcium and zinc ions. Its function is as follows. 5'-&gt;3' double-stranded DNA exonuclease involved in mismatch repair and eventually also in mitotic recombination between direct repeats. Also has a minor role in the correction of large DNA mismatches that occur in the heteroduplex DNA during meiotic recombination at the HIS4 locus. The sequence is that of Exodeoxyribonuclease 1 (EXO1) from Saccharomyces cerevisiae (strain ATCC 204508 / S288c) (Baker's yeast).